The sequence spans 626 residues: 4-hydroxy-3-methylbut-2-en-1-yl diphosphate synthase (flavodoxin) (626 aa).

[4Fe-4S] cluster-binding residues include Cys-521, Cys-524, Cys-555, and Glu-562.

Belongs to the IspG family. [4Fe-4S] cluster is required as a cofactor.

It carries out the reaction (2E)-4-hydroxy-3-methylbut-2-enyl diphosphate + oxidized [flavodoxin] + H2O + 2 H(+) = 2-C-methyl-D-erythritol 2,4-cyclic diphosphate + reduced [flavodoxin]. Its pathway is isoprenoid biosynthesis; isopentenyl diphosphate biosynthesis via DXP pathway; isopentenyl diphosphate from 1-deoxy-D-xylulose 5-phosphate: step 5/6. Functionally, converts 2C-methyl-D-erythritol 2,4-cyclodiphosphate (ME-2,4cPP) into 1-hydroxy-2-methyl-2-(E)-butenyl 4-diphosphate. The sequence is that of 4-hydroxy-3-methylbut-2-en-1-yl diphosphate synthase (flavodoxin) from Bacteroides fragilis (strain YCH46).